The chain runs to 217 residues: ATP-dependent Clp protease proteolytic subunit 3 (217 aa).

A compositionally biased stretch (low complexity) spans Met1–Thr13. A disordered region spans residues Met1–Ala23. Ser108 acts as the Nucleophile in catalysis. Residue His133 is part of the active site.

Belongs to the peptidase S14 family. Fourteen ClpP subunits assemble into 2 heptameric rings which stack back to back to give a disk-like structure with a central cavity, resembling the structure of eukaryotic proteasomes.

It localises to the cytoplasm. The catalysed reaction is Hydrolysis of proteins to small peptides in the presence of ATP and magnesium. alpha-casein is the usual test substrate. In the absence of ATP, only oligopeptides shorter than five residues are hydrolyzed (such as succinyl-Leu-Tyr-|-NHMec, and Leu-Tyr-Leu-|-Tyr-Trp, in which cleavage of the -Tyr-|-Leu- and -Tyr-|-Trp bonds also occurs).. Functionally, cleaves peptides in various proteins in a process that requires ATP hydrolysis. Has a chymotrypsin-like activity. Plays a major role in the degradation of misfolded proteins. This chain is ATP-dependent Clp protease proteolytic subunit 3, found in Streptomyces coelicolor (strain ATCC BAA-471 / A3(2) / M145).